The chain runs to 238 residues: Zinc-finger homeodomain protein 11 (238 aa).

The segment at 12-59 adopts a ZF-HD dimerization-type; degenerate zinc-finger fold; the sequence is YRECMRNHAAKLGTYANDGCCEYTPDDGHPAGLLCAACGCHRNFHRKD. A DNA-binding region (homeobox) is located at residues 119-188; that stretch reads RRRTRTKFTE…NHKAGGGGGG (70 aa). The span at 183–200 shows a compositional bias: gly residues; that stretch reads GGGGGGGGSGGPGAGGGA. The interval 183 to 238 is disordered; sequence GGGGGGGGSGGPGAGGGAQTSSSTTRGGGDVGVGLSPAMGGDGEDDEEVRGSEMCM.

As to quaternary structure, homo- and heterodimer with other ZFHD proteins.

The protein localises to the nucleus. In terms of biological role, putative transcription factor. This Oryza sativa subsp. indica (Rice) protein is Zinc-finger homeodomain protein 11 (ZHD11).